Reading from the N-terminus, the 157-residue chain is MSQVILDLQLACENHAGLPDEAQFQRWLDGVIPQFQEEAEVTIRLVDEAESHDLNLTYRGKDKPTNVLSFPFEAPPGIEMPLLGDLIICRQVVEQEAQEQSKPLEAHWAHMVVHGSLHLLGYDHIDDDEAEEMESLETEIMLAMGYEDPYIAEKITE.

3 residues coordinate Zn(2+): H114, H118, and H124.

This sequence belongs to the endoribonuclease YbeY family. Zn(2+) is required as a cofactor.

The protein localises to the cytoplasm. Its function is as follows. Single strand-specific metallo-endoribonuclease involved in late-stage 70S ribosome quality control and in maturation of the 3' terminus of the 16S rRNA. This Salmonella paratyphi A (strain AKU_12601) protein is Endoribonuclease YbeY.